Here is a 194-residue protein sequence, read N- to C-terminus: ATP-dependent Clp protease proteolytic subunit (194 aa).

S98 acts as the Nucleophile in catalysis. H123 is a catalytic residue.

It belongs to the peptidase S14 family. As to quaternary structure, fourteen ClpP subunits assemble into 2 heptameric rings which stack back to back to give a disk-like structure with a central cavity, resembling the structure of eukaryotic proteasomes.

The protein resides in the cytoplasm. It carries out the reaction Hydrolysis of proteins to small peptides in the presence of ATP and magnesium. alpha-casein is the usual test substrate. In the absence of ATP, only oligopeptides shorter than five residues are hydrolyzed (such as succinyl-Leu-Tyr-|-NHMec, and Leu-Tyr-Leu-|-Tyr-Trp, in which cleavage of the -Tyr-|-Leu- and -Tyr-|-Trp bonds also occurs).. Cleaves peptides in various proteins in a process that requires ATP hydrolysis. Has a chymotrypsin-like activity. Plays a major role in the degradation of misfolded proteins. The protein is ATP-dependent Clp protease proteolytic subunit of Staphylococcus carnosus (strain TM300).